A 78-amino-acid chain; its full sequence is Putative snRNP Sm-like protein (78 aa).

The region spanning 4 to 76 is the Sm domain; the sequence is RPLDVIHRSL…VLAISPVDVG (73 aa).

It belongs to the snRNP Sm proteins family.

In Thermococcus onnurineus (strain NA1), this protein is Putative snRNP Sm-like protein.